The chain runs to 275 residues: Putative ankyrin repeat protein L715 (275 aa).

4 ANK repeats span residues 94 to 123, 124 to 153, 155 to 183, and 184 to 213; these read NINY…DINY, NNGL…NTND, IFQL…SIDP, and IYST…SDST. Residues 253–275 form a disordered region; that stretch reads NQDESDVGDDAENDIENDIEDDN. Over residues 255–275 the composition is skewed to acidic residues; the sequence is DESDVGDDAENDIENDIEDDN.

The protein is Putative ankyrin repeat protein L715 of Acanthamoeba polyphaga mimivirus (APMV).